The primary structure comprises 698 residues: RNA cytosine-C(5)-methyltransferase NSUN2 (698 aa).

Positions 1 to 10 (MGRKNRRNRQ) are enriched in basic residues. The segment at 1–28 (MGRKNRRNRQRRTEQRSPAEEERRKARE) is disordered. Positions 11 to 28 (RRTEQRSPAEEERRKARE) are enriched in basic and acidic residues. S-adenosyl-L-methionine contacts are provided by residues 182-188 (CAAPGSK), Asp-213, Asp-240, and Asp-266. Residue Cys-319 is the Nucleophile of the active site. The disordered stretch occupies residues 472-496 (AVDAENGETKPCTNQSGSSKTDSVC). Positions 482 to 493 (PCTNQSGSSKTD) are enriched in polar residues.

This sequence belongs to the class I-like SAM-binding methyltransferase superfamily. RsmB/NOP family. TRM4 subfamily.

The protein resides in the nucleus. It is found in the nucleolus. Its subcellular location is the cytoplasm. The protein localises to the mitochondrion. It localises to the cytoskeleton. The protein resides in the spindle. It is found in the secreted. Its subcellular location is the extracellular exosome. It carries out the reaction cytidine(48) in tRNA + S-adenosyl-L-methionine = 5-methylcytidine(48) in tRNA + S-adenosyl-L-homocysteine + H(+). It catalyses the reaction cytidine(49) in tRNA + S-adenosyl-L-methionine = 5-methylcytidine(49) in tRNA + S-adenosyl-L-homocysteine + H(+). The catalysed reaction is cytidine(50) in tRNA + S-adenosyl-L-methionine = 5-methylcytidine(50) in tRNA + S-adenosyl-L-homocysteine + H(+). The enzyme catalyses cytidine(34) in tRNA precursor + S-adenosyl-L-methionine = 5-methylcytidine(34) in tRNA precursor + S-adenosyl-L-homocysteine + H(+). It carries out the reaction a cytidine in mRNA + S-adenosyl-L-methionine = a 5-methylcytidine in mRNA + S-adenosyl-L-homocysteine + H(+). RNA cytosine C(5)-methyltransferase that methylates cytosine to 5-methylcytosine (m5C) in various RNAs, such as tRNAs, mRNAs and some long non-coding RNAs (lncRNAs). Involved in various processes, such as epidermal stem cell differentiation, testis differentiation and maternal to zygotic transition during early development: acts by increasing protein synthesis; cytosine C(5)-methylation promoting tRNA stability and preventing mRNA decay. Methylates cytosine to 5-methylcytosine (m5C) at positions 34 and 48 of intron-containing tRNA(Leu)(CAA) precursors, and at positions 48, 49 and 50 of tRNA(Gly)(GCC) precursors. tRNA methylation is required generation of RNA fragments derived from tRNAs (tRFs). Also mediates C(5)-methylation of mitochondrial tRNAs. Catalyzes cytosine C(5)-methylation of mRNAs, leading to stabilize them and prevent mRNA decay. Cytosine C(5)-methylation of mRNAs also regulates mRNA export. Also mediates cytosine C(5)-methylation of non-coding RNAs, such as vault RNAs (vtRNAs), promoting their processing into regulatory small RNAs. Required for proper spindle assembly and chromosome segregation, independently of its methyltransferase activity. This chain is RNA cytosine-C(5)-methyltransferase NSUN2, found in Xenopus laevis (African clawed frog).